The following is a 297-amino-acid chain: Acetylglutamate kinase (297 aa).

Residues 68-69 (GG), Arg90, and Asn195 contribute to the substrate site.

Belongs to the acetylglutamate kinase family. ArgB subfamily.

The protein resides in the cytoplasm. It carries out the reaction N-acetyl-L-glutamate + ATP = N-acetyl-L-glutamyl 5-phosphate + ADP. Its pathway is amino-acid biosynthesis; L-arginine biosynthesis; N(2)-acetyl-L-ornithine from L-glutamate: step 2/4. Catalyzes the ATP-dependent phosphorylation of N-acetyl-L-glutamate. The sequence is that of Acetylglutamate kinase from Mesorhizobium japonicum (strain LMG 29417 / CECT 9101 / MAFF 303099) (Mesorhizobium loti (strain MAFF 303099)).